A 150-amino-acid polypeptide reads, in one-letter code: MKRIMLIGPSQCGKTSLTQCMRGEALHYQKTQAIVWSPTTIDTPGEYLENRCLYSALLASACEADIIALVLNADAPWSPFSPGFTGPMNRPVIGLVTKADLASPQRISLVESWLVQAGAQKVFFTSALENTGVDEMFIFLNAKESSCLTK.

The segment at 1–42 (MKRIMLIGPSQCGKTSLTQCMRGEALHYQKTQAIVWSPTTID) is targets protein to the BMC. Position 8–15 (8–15 (GPSQCGKT)) interacts with GTP.

It belongs to the EutP/PduV family. Interacts with PduU, probably via the PduU beta-barrel which is predicted by modeling to be on the exterior of the BMC.

The protein resides in the bacterial microcompartment. It participates in polyol metabolism; 1,2-propanediol degradation. In terms of biological role, may play a role in the spatial distribution of the bacterial microcompartment (BMC) dedicated to 1,2-PD degradation, perhaps being involved in cytoskeleton dynamics; might bind GTP. This subunit is directly targeted to the BMC. Expression of a cosmid containing the full 21-gene pdu operon in E.coli allows E.coli to grow on 1,2-propanediol (1,2-PD) with the appearance of bacterial microcompartments (BMC) in its cytoplasm. Functionally, the 1,2-PD-specific bacterial microcompartment (BMC) concentrates low levels of 1,2-PD catabolic enzymes, concentrates volatile reaction intermediates thus enhancing pathway flux and keeps the level of toxic, mutagenic propionaldehyde low. In Citrobacter freundii, this protein is Propanediol utilization protein PduV.